Consider the following 529-residue polypeptide: Putative E3 ubiquitin-protein ligase ARI4 (529 aa).

The span at 1–22 (MDDEYMSLEEEEDNCYPSEFDD) shows a compositional bias: acidic residues. The tract at residues 1-23 (MDDEYMSLEEEEDNCYPSEFDDH) is disordered. Residues 115–327 (KTMKCDICME…IAGHSCGRYK (213 aa)) are TRIAD supradomain. Cys119, Cys122, Cys137, His139, Cys142, Cys145, Cys164, Cys169, Cys206, Cys212, Cys230, Cys232, Cys237, Cys240, His245, Cys250, Cys277, and Cys280 together coordinate Zn(2+). Residues 119 to 169 (CDICMEEDLSKYAMTRMECGHRFCNDCWKEHFTVRINEGEGKRIRCMAYKC) form an RING-type 1 zinc finger. The IBR-type zinc finger occupies 186 to 250 (EKFDRFLIES…LSESHSPCSC (65 aa)). The RING-type 2; atypical zinc finger occupies 277-305 (CPKCSKPIQKRDGCNHMTCKCGQHFCWLC). Cys290 is an active-site residue. The Zn(2+) site is built by Cys295, Cys297, Cys302, Cys305, His313, and Cys323.

This sequence belongs to the RBR family. Ariadne subfamily. Requires Zn(2+) as cofactor.

The catalysed reaction is [E2 ubiquitin-conjugating enzyme]-S-ubiquitinyl-L-cysteine + [acceptor protein]-L-lysine = [E2 ubiquitin-conjugating enzyme]-L-cysteine + [acceptor protein]-N(6)-ubiquitinyl-L-lysine.. It participates in protein modification; protein ubiquitination. Its function is as follows. Might act as an E3 ubiquitin-protein ligase, or as part of E3 complex, which accepts ubiquitin from specific E2 ubiquitin-conjugating enzymes and then transfers it to substrates. The protein is Putative E3 ubiquitin-protein ligase ARI4 (ARI4) of Arabidopsis thaliana (Mouse-ear cress).